Consider the following 390-residue polypeptide: Succinate--CoA ligase [ADP-forming] subunit beta (390 aa).

An ATP-grasp domain is found at 9–245; that stretch reads KHLLKKYNIP…TTQEDEHETM (237 aa). Residues lysine 46, 53-55, glutamate 99, serine 102, and glutamate 107 contribute to the ATP site; that span reads GRG. Mg(2+)-binding residues include asparagine 200 and aspartate 214. Residues asparagine 265 and 322-324 each bind substrate; that span reads GIV.

The protein belongs to the succinate/malate CoA ligase beta subunit family. In terms of assembly, heterotetramer of two alpha and two beta subunits. Mg(2+) serves as cofactor.

It carries out the reaction succinate + ATP + CoA = succinyl-CoA + ADP + phosphate. It catalyses the reaction GTP + succinate + CoA = succinyl-CoA + GDP + phosphate. The protein operates within carbohydrate metabolism; tricarboxylic acid cycle; succinate from succinyl-CoA (ligase route): step 1/1. Succinyl-CoA synthetase functions in the citric acid cycle (TCA), coupling the hydrolysis of succinyl-CoA to the synthesis of either ATP or GTP and thus represents the only step of substrate-level phosphorylation in the TCA. The beta subunit provides nucleotide specificity of the enzyme and binds the substrate succinate, while the binding sites for coenzyme A and phosphate are found in the alpha subunit. The polypeptide is Succinate--CoA ligase [ADP-forming] subunit beta (Coxiella burnetii (strain CbuG_Q212) (Coxiella burnetii (strain Q212))).